The chain runs to 77 residues: Acyl carrier protein (77 aa).

The 76-residue stretch at 2–77 (SNIEERVKKI…AAIDYVSKNQ (76 aa)) folds into the Carrier domain. Residue S37 is modified to O-(pantetheine 4'-phosphoryl)serine.

It belongs to the acyl carrier protein (ACP) family. 4'-phosphopantetheine is transferred from CoA to a specific serine of apo-ACP by AcpS. This modification is essential for activity because fatty acids are bound in thioester linkage to the sulfhydryl of the prosthetic group.

The protein localises to the cytoplasm. It functions in the pathway lipid metabolism; fatty acid biosynthesis. In terms of biological role, carrier of the growing fatty acid chain in fatty acid biosynthesis. In Shewanella denitrificans (strain OS217 / ATCC BAA-1090 / DSM 15013), this protein is Acyl carrier protein.